Consider the following 553-residue polypeptide: Urocanate hydratase (553 aa).

NAD(+) is bound by residues glycine 45–glycine 46, glutamine 123, glycine 169–glycine 171, aspartate 189, arginine 194, asparagine 235–alanine 236, glutamine 256–histidine 260, tyrosine 266–valine 267, tyrosine 315, and glycine 485.

This sequence belongs to the urocanase family. NAD(+) is required as a cofactor.

It is found in the cytoplasm. The catalysed reaction is 4-imidazolone-5-propanoate = trans-urocanate + H2O. The protein operates within amino-acid degradation; L-histidine degradation into L-glutamate; N-formimidoyl-L-glutamate from L-histidine: step 2/3. In terms of biological role, catalyzes the conversion of urocanate to 4-imidazolone-5-propionate. This chain is Urocanate hydratase, found in Staphylococcus aureus (strain MRSA252).